An 86-amino-acid chain; its full sequence is Small ribosomal subunit protein bS20 (86 aa).

Belongs to the bacterial ribosomal protein bS20 family.

Its function is as follows. Binds directly to 16S ribosomal RNA. This is Small ribosomal subunit protein bS20 from Oceanobacillus iheyensis (strain DSM 14371 / CIP 107618 / JCM 11309 / KCTC 3954 / HTE831).